A 211-amino-acid polypeptide reads, in one-letter code: Phosphoglycerate mutase (211 aa).

Substrate contacts are provided by residues 14–21 (RHGESEWN) and 27–28 (TG). Histidine 15 (tele-phosphohistidine intermediate) is an active-site residue. Phosphothreonine is present on threonine 37. Serine 62 is subject to Phosphoserine. Residues arginine 66, 93–96 (ERYY), lysine 104, 120–121 (RR), and 164–165 (GN) contribute to the substrate site. Glutamate 93 (proton donor/acceptor) is an active-site residue. The residue at position 96 (tyrosine 96) is a Phosphotyrosine. A Phosphoserine modification is found at serine 166.

Belongs to the phosphoglycerate mutase family. BPG-dependent PGAM subfamily. As to quaternary structure, monomer. Post-translationally, the N-terminus is blocked.

The enzyme catalyses (2R)-2-phosphoglycerate = (2R)-3-phosphoglycerate. It functions in the pathway carbohydrate degradation; glycolysis; pyruvate from D-glyceraldehyde 3-phosphate: step 3/5. In Schizosaccharomyces pombe (strain 972 / ATCC 24843) (Fission yeast), this protein is Phosphoglycerate mutase (gpm1).